The sequence spans 490 residues: Alpha-galactosidase (490 aa).

4–70 (FKIAIIGAGS…LPTRVTATTD (67 aa)) lines the NAD(+) pocket. Asparagine 150 contacts substrate. Mn(2+) is bound at residue cysteine 171. Histidine 172 functions as the Proton donor in the catalytic mechanism. Histidine 201 serves as a coordination point for Mn(2+). Tyrosine 258 acts as the Proton acceptor in catalysis.

This sequence belongs to the glycosyl hydrolase 4 family. As to quaternary structure, homodimer. Requires Mn(2+) as cofactor. The cofactor is NAD(+).

The catalysed reaction is Hydrolysis of terminal, non-reducing alpha-D-galactose residues in alpha-D-galactosides, including galactose oligosaccharides, galactomannans and galactolipids.. The protein is Alpha-galactosidase (melA) of Rhizobium meliloti (strain 1021) (Ensifer meliloti).